The following is a 146-amino-acid chain: UPF0178 protein BCAH187_A3092 (146 aa).

It belongs to the UPF0178 family.

This Bacillus cereus (strain AH187) protein is UPF0178 protein BCAH187_A3092.